The primary structure comprises 638 residues: Phosphomethylpyrimidine synthase (638 aa).

Residues N233, M262, Y291, H327, 347–349 (SRG), 388–391 (DGLR), and E427 contribute to the substrate site. H431 contacts Zn(2+). A substrate-binding site is contributed by Y454. H495 lines the Zn(2+) pocket. 3 residues coordinate [4Fe-4S] cluster: C575, C578, and C583.

This sequence belongs to the ThiC family. As to quaternary structure, homodimer. It depends on [4Fe-4S] cluster as a cofactor.

The enzyme catalyses 5-amino-1-(5-phospho-beta-D-ribosyl)imidazole + S-adenosyl-L-methionine = 4-amino-2-methyl-5-(phosphooxymethyl)pyrimidine + CO + 5'-deoxyadenosine + formate + L-methionine + 3 H(+). Its pathway is cofactor biosynthesis; thiamine diphosphate biosynthesis. Catalyzes the synthesis of the hydroxymethylpyrimidine phosphate (HMP-P) moiety of thiamine from aminoimidazole ribotide (AIR) in a radical S-adenosyl-L-methionine (SAM)-dependent reaction. This is Phosphomethylpyrimidine synthase from Saccharophagus degradans (strain 2-40 / ATCC 43961 / DSM 17024).